We begin with the raw amino-acid sequence, 325 residues long: GMP reductase (325 aa).

Cys173 serves as the catalytic Thioimidate intermediate. Position 202–225 (Ile202–Val225) interacts with NADP(+).

This sequence belongs to the IMPDH/GMPR family. GuaC type 2 subfamily.

It catalyses the reaction IMP + NH4(+) + NADP(+) = GMP + NADPH + 2 H(+). Catalyzes the irreversible NADPH-dependent deamination of GMP to IMP. It functions in the conversion of nucleobase, nucleoside and nucleotide derivatives of G to A nucleotides, and in maintaining the intracellular balance of A and G nucleotides. This Acidovorax ebreus (strain TPSY) (Diaphorobacter sp. (strain TPSY)) protein is GMP reductase.